Here is a 194-residue protein sequence, read N- to C-terminus: MLQPKQTSWVILAGGQARRMGGKDKGFVLFQNKPLIEHALDTLTSQTDQIAINANRSIEEYSRYAVTFSDQFSEYPGPLAGMHSGLVNMNSDWVGFIPCDSPNLPNNLVSLLCNAVKEDTDIVVAHDGEYMQPVVTLMHKRIIPKIDAFLTRGDRKIILLYKECNTVFADFSDYPNAFINLNSPQELEQFGTLL.

Residues 12–14 (LAG), lysine 25, asparagine 53, aspartate 70, and aspartate 100 contribute to the GTP site. Aspartate 100 is a Mg(2+) binding site.

Belongs to the MobA family. Monomer. Requires Mg(2+) as cofactor.

Its subcellular location is the cytoplasm. The catalysed reaction is Mo-molybdopterin + GTP + H(+) = Mo-molybdopterin guanine dinucleotide + diphosphate. Its function is as follows. Transfers a GMP moiety from GTP to Mo-molybdopterin (Mo-MPT) cofactor (Moco or molybdenum cofactor) to form Mo-molybdopterin guanine dinucleotide (Mo-MGD) cofactor. The sequence is that of Molybdenum cofactor guanylyltransferase from Aliivibrio fischeri (strain MJ11) (Vibrio fischeri).